We begin with the raw amino-acid sequence, 253 residues long: uncharacterized protein (253 aa).

A run of 6 helical transmembrane segments spans residues 17-37, 46-66, 93-113, 139-159, 172-192, and 222-242; these read MWLL…HIIA, IFGF…VFVF, LAAS…YGIW, MYGL…WTVF, AMVL…SPLV, and IHLS…LLIM.

It localises to the cell membrane. This is an uncharacterized protein from Bacillus subtilis (strain 168).